The sequence spans 3122 residues: Large tegument protein deneddylase (3122 aa).

Residues 1–248 are deubiquitination activity; that stretch reads MIPAALPHPT…SETYLQDEPF (248 aa). One can recognise a Peptidase C76 domain in the interval 20–238; sequence VVTGVRNQFA…TAAALHLYGA (219 aa). Residues Cys-40, Asp-172, and His-174 contribute to the active site. Disordered regions lie at residues 281–367 and 387–496; these read GSGP…GDAA and RARY…PPGA. Residues 343–353 show a composition bias toward low complexity; it reads SAPDAAASGPP. Composition is skewed to basic residues over residues 387–400 and 425–436; these read RARY…RRRP and KAKKKSAPKKKA. Residues 437-454 are compositionally biased toward low complexity; that stretch reads PVAAEVPASSPTPIAATV. Residues 548–578 are interaction with inner tegument protein; sequence LELCVIFFFERVLAFLIENGARTHTQAGVAG. Disordered stretches follow at residues 2494-2539, 2570-2974, and 3006-3059; these read YQRP…ADPG, ASDD…THLP, and SDDE…SQFG. Composition is skewed to pro residues over residues 2578-2590 and 2637-2654; these read TPNP…PPPA and PSPP…PPPA. Low complexity predominate over residues 2655 to 2667; that stretch reads FSGSAAAFSAAVP. Residues 2668 to 2681 show a composition bias toward basic residues; sequence RVRRSRRTRAKSRA. Composition is skewed to pro residues over residues 2690 to 2700 and 2710 to 2719; these read GWRPPALPAPV and PDQPPTPESA. Over residues 2734–2743 the composition is skewed to low complexity; that stretch reads ASARGAFPAP. 2 stretches are compositionally biased toward pro residues: residues 2744–2753 and 2775–2785; these read TLAPIPPPPA and SPTPPRGPAAG. Composition is skewed to low complexity over residues 2786 to 2807 and 2814 to 2825; these read PPRR…SLPS and HAAAVSAAAAAV. Residues 2841–2852 are compositionally biased toward pro residues; the sequence is SPPPLAPGPVAP. Residues 2853-2867 are compositionally biased toward low complexity; that stretch reads SEPLCGWVVPGGPVA. 11 consecutive repeat copies span residues 2891 to 2895, 2896 to 2900, 2901 to 2905, 2906 to 2910, 2911 to 2915, 2916 to 2920, 2921 to 2925, 2926 to 2930, 2931 to 2935, 2936 to 2940, and 2941 to 2945. Residues 2891 to 2945 form an 11 X 5 AA tandem repeats of P-Q-P-P-L region; sequence PQPPLPQPPLPQPPLPQPPLPQPPLPQPPLPQPPLPQPPLPQPPLPQPPLPQPPL. A compositionally biased stretch (pro residues) spans 2891 to 2947; that stretch reads PQPPLPQPPLPQPPLPQPPLPQPPLPQPPLPQPPLPQPPLPQPPLPQPPLPQPPLPP. Composition is skewed to polar residues over residues 2950–2959 and 2965–2974; these read RTLTPQSRDS and SPTHTNTHLP. The span at 3006 to 3020 shows a compositional bias: basic and acidic residues; that stretch reads SDDEHSDADSLRFSD. The span at 3029 to 3045 shows a compositional bias: pro residues; that stretch reads PLPPEPHLPPADEPPGP.

It belongs to the herpesviridae large tegument protein family. As to quaternary structure, interacts with host CUL1 and CUL4A; these interactions inhibit the E3 ligase activity of cullins. Interacts with inner tegument protein. Interacts with capsid vertex specific component CVC2. Interacts with the major capsid protein/MCP. Proteolytically processed, possibly into several polypeptides. Enzymatic activity is only detectable following cleavage of the UL36 protein, which occurs late during viral replication.

The protein resides in the virion tegument. It is found in the host cytoplasm. Its subcellular location is the host nucleus. The enzyme catalyses Thiol-dependent hydrolysis of ester, thioester, amide, peptide and isopeptide bonds formed by the C-terminal Gly of ubiquitin (a 76-residue protein attached to proteins as an intracellular targeting signal).. In terms of biological role, large tegument protein that plays multiple roles in the viral cycle. During viral entry, remains associated with the capsid while most of the tegument is detached and participates in the capsid transport toward the host nucleus. Plays a role in the routing of the capsid at the nuclear pore complex and subsequent uncoating. Within the host nucleus, acts as a deneddylase and promotes the degradation of nuclear CRLs (cullin-RING ubiquitin ligases) and thereby stabilizes nuclear CRL substrates, while cytoplasmic CRLs remain unaffected. These modifications prevent host cell cycle S-phase progression and create a favorable environment allowing efficient viral genome replication. Participates later in the secondary envelopment of capsids. Indeed, plays a linker role for the association of the outer viral tegument to the capsids together with the inner tegument protein. The sequence is that of Large tegument protein deneddylase from Human herpesvirus 2 (strain HG52) (HHV-2).